Here is a 216-residue protein sequence, read N- to C-terminus: 3-keto-L-gulonate-6-phosphate decarboxylase UlaD (216 aa).

Residue Asp11 coordinates substrate. Mg(2+) contacts are provided by Glu33 and Asp62. Arg192 serves as a coordination point for substrate.

The protein belongs to the HPS/KGPDC family. KGPDC subfamily. As to quaternary structure, homodimer. Requires Mg(2+) as cofactor.

It carries out the reaction 3-dehydro-L-gulonate 6-phosphate + H(+) = L-xylulose 5-phosphate + CO2. It participates in cofactor degradation; L-ascorbate degradation; D-xylulose 5-phosphate from L-ascorbate: step 2/4. Functionally, catalyzes the decarboxylation of 3-keto-L-gulonate-6-P into L-xylulose-5-P. Is involved in the anaerobic L-ascorbate utilization. The polypeptide is 3-keto-L-gulonate-6-phosphate decarboxylase UlaD (Salmonella choleraesuis (strain SC-B67)).